The primary structure comprises 141 residues: Large ribosomal subunit protein uL16 (141 aa).

It belongs to the universal ribosomal protein uL16 family. Part of the 50S ribosomal subunit.

Functionally, binds 23S rRNA and is also seen to make contacts with the A and possibly P site tRNAs. This chain is Large ribosomal subunit protein uL16, found in Campylobacter concisus (strain 13826).